Reading from the N-terminus, the 91-residue chain is Small ribosomal subunit protein uS19 (91 aa).

The protein belongs to the universal ribosomal protein uS19 family.

Functionally, protein S19 forms a complex with S13 that binds strongly to the 16S ribosomal RNA. The sequence is that of Small ribosomal subunit protein uS19 from Marinomonas sp. (strain MWYL1).